The primary structure comprises 360 residues: Chorismate synthase (360 aa).

Residue R47 participates in NADP(+) binding. Residues 124 to 126 (RAS), G286, 301 to 305 (KPTAT), and R327 each bind FMN.

The protein belongs to the chorismate synthase family. As to quaternary structure, homotetramer. Requires FMNH2 as cofactor.

It catalyses the reaction 5-O-(1-carboxyvinyl)-3-phosphoshikimate = chorismate + phosphate. The protein operates within metabolic intermediate biosynthesis; chorismate biosynthesis; chorismate from D-erythrose 4-phosphate and phosphoenolpyruvate: step 7/7. Its function is as follows. Catalyzes the anti-1,4-elimination of the C-3 phosphate and the C-6 proR hydrogen from 5-enolpyruvylshikimate-3-phosphate (EPSP) to yield chorismate, which is the branch point compound that serves as the starting substrate for the three terminal pathways of aromatic amino acid biosynthesis. This reaction introduces a second double bond into the aromatic ring system. The sequence is that of Chorismate synthase from Synechococcus sp. (strain RCC307).